The primary structure comprises 404 residues: Probable tRNA sulfurtransferase (404 aa).

The region spanning 60–165 (TAVAESLKQV…EEAAYLSYET (106 aa)) is the THUMP domain. Residues 183–184 (ML), 208–209 (HF), Arg-265, Gly-287, and Gln-296 contribute to the ATP site.

Belongs to the ThiI family.

It is found in the cytoplasm. It catalyses the reaction [ThiI sulfur-carrier protein]-S-sulfanyl-L-cysteine + a uridine in tRNA + 2 reduced [2Fe-2S]-[ferredoxin] + ATP + H(+) = [ThiI sulfur-carrier protein]-L-cysteine + a 4-thiouridine in tRNA + 2 oxidized [2Fe-2S]-[ferredoxin] + AMP + diphosphate. The enzyme catalyses [ThiS sulfur-carrier protein]-C-terminal Gly-Gly-AMP + S-sulfanyl-L-cysteinyl-[cysteine desulfurase] + AH2 = [ThiS sulfur-carrier protein]-C-terminal-Gly-aminoethanethioate + L-cysteinyl-[cysteine desulfurase] + A + AMP + 2 H(+). It participates in cofactor biosynthesis; thiamine diphosphate biosynthesis. Functionally, catalyzes the ATP-dependent transfer of a sulfur to tRNA to produce 4-thiouridine in position 8 of tRNAs, which functions as a near-UV photosensor. Also catalyzes the transfer of sulfur to the sulfur carrier protein ThiS, forming ThiS-thiocarboxylate. This is a step in the synthesis of thiazole, in the thiamine biosynthesis pathway. The sulfur is donated as persulfide by IscS. The sequence is that of Probable tRNA sulfurtransferase from Streptococcus pneumoniae serotype 2 (strain D39 / NCTC 7466).